Reading from the N-terminus, the 561-residue chain is Tectonic-like complex member MKS1 (561 aa).

A C2 B9-type domain is found at 314-442 (LRLFVNGEVV…TASTWRPMEL (129 aa)).

Part of the tectonic-like complex (also named B9 complex). Interacts with TMEM107. Interacts with TCTN3, AHI1, TCTN1, TCTN2, CC2D2A. Interacts with FLNA. Interacts with TMEM67. Interacts with B9D1 and B9D2.

It localises to the cytoplasm. Its subcellular location is the cytoskeleton. It is found in the cilium basal body. The protein resides in the microtubule organizing center. The protein localises to the centrosome. Functionally, component of the tectonic-like complex, a complex localized at the transition zone of primary cilia and acting as a barrier that prevents diffusion of transmembrane proteins between the cilia and plasma membranes. Involved in centrosome migration to the apical cell surface during early ciliogenesis. Required for ciliary structure and function, including a role in regulating length and appropriate number through modulating centrosome duplication. Required for cell branching morphology. In Rattus norvegicus (Rat), this protein is Tectonic-like complex member MKS1 (Mks1).